A 476-amino-acid polypeptide reads, in one-letter code: Light-independent protochlorophyllide reductase subunit N (476 aa).

Residues cysteine 31, cysteine 56, and cysteine 116 each contribute to the [4Fe-4S] cluster site.

Belongs to the BchN/ChlN family. Protochlorophyllide reductase is composed of three subunits; ChlL, ChlN and ChlB. Forms a heterotetramer of two ChlB and two ChlN subunits. Requires [4Fe-4S] cluster as cofactor.

Its subcellular location is the plastid. It localises to the chloroplast. The catalysed reaction is chlorophyllide a + oxidized 2[4Fe-4S]-[ferredoxin] + 2 ADP + 2 phosphate = protochlorophyllide a + reduced 2[4Fe-4S]-[ferredoxin] + 2 ATP + 2 H2O. Its pathway is porphyrin-containing compound metabolism; chlorophyll biosynthesis (light-independent). Functionally, component of the dark-operative protochlorophyllide reductase (DPOR) that uses Mg-ATP and reduced ferredoxin to reduce ring D of protochlorophyllide (Pchlide) to form chlorophyllide a (Chlide). This reaction is light-independent. The NB-protein (ChlN-ChlB) is the catalytic component of the complex. This Staurastrum punctulatum (Green alga) protein is Light-independent protochlorophyllide reductase subunit N.